The following is a 103-amino-acid chain: Large ribosomal subunit protein bL28 (103 aa).

Belongs to the bacterial ribosomal protein bL28 family.

The protein is Large ribosomal subunit protein bL28 of Anaplasma marginale (strain St. Maries).